Consider the following 95-residue polypeptide: Toxin HigB-1 (95 aa).

Toxic component of a type II toxin-antitoxin (TA) system. Inhibits translation by cleavage of mRNA. This is Toxin HigB-1 (higB-1) from Vibrio cholerae serotype O1 (strain ATCC 39315 / El Tor Inaba N16961).